A 682-amino-acid polypeptide reads, in one-letter code: Potassium-transporting ATPase ATP-binding subunit (682 aa).

The next 4 helical transmembrane spans lie at 34 to 54 (PVMF…IAMA), 62 to 82 (ALFS…ANFA), 219 to 239 (IALT…TATL), and 254 to 274 (VLVA…LSAI). Asp-307 acts as the 4-aspartylphosphate intermediate in catalysis. Residues Asp-344, Glu-348, 377–384 (FTAQSRMS), and Lys-395 each bind ATP. Mg(2+)-binding residues include Asp-518 and Asp-522. Transmembrane regions (helical) follow at residues 588 to 608 (FAII…LNIM), 616 to 636 (AILS…PLAL), and 656 to 676 (IYGL…DLLL).

It belongs to the cation transport ATPase (P-type) (TC 3.A.3) family. Type IA subfamily. As to quaternary structure, the system is composed of three essential subunits: KdpA, KdpB and KdpC.

It localises to the cell inner membrane. The catalysed reaction is K(+)(out) + ATP + H2O = K(+)(in) + ADP + phosphate + H(+). Its function is as follows. Part of the high-affinity ATP-driven potassium transport (or Kdp) system, which catalyzes the hydrolysis of ATP coupled with the electrogenic transport of potassium into the cytoplasm. This subunit is responsible for energy coupling to the transport system and for the release of the potassium ions to the cytoplasm. This chain is Potassium-transporting ATPase ATP-binding subunit, found in Escherichia coli (strain SMS-3-5 / SECEC).